A 144-amino-acid chain; its full sequence is Large ribosomal subunit protein uL11 (144 aa).

The protein belongs to the universal ribosomal protein uL11 family. As to quaternary structure, part of the ribosomal stalk of the 50S ribosomal subunit. Interacts with L10 and the large rRNA to form the base of the stalk. L10 forms an elongated spine to which L12 dimers bind in a sequential fashion forming a multimeric L10(L12)X complex. One or more lysine residues are methylated.

Functionally, forms part of the ribosomal stalk which helps the ribosome interact with GTP-bound translation factors. The sequence is that of Large ribosomal subunit protein uL11 from Neisseria meningitidis serogroup C (strain 053442).